The sequence spans 230 residues: Ion-translocating oxidoreductase complex subunit E (230 aa).

6 consecutive transmembrane segments (helical) span residues 18 to 38 (ALVQLLGLCPLLAVTSTATNA), 39 to 59 (LGLGLATTLVLTLTNLTVSAL), 63 to 83 (TPAEIRIPIYVMIIASVVSAV), 86 to 106 (LINAYAFGLYQSLGIFIPLIV), 125 to 145 (WLSALDGFSIGMGATGAMFVL), and 182 to 202 (PFLLAMLPPGAFIGLGLMLAV).

The protein belongs to the NqrDE/RnfAE family. In terms of assembly, the complex is composed of six subunits: RsxA, RsxB, RsxC, RsxD, RsxE and RsxG.

It is found in the cell inner membrane. Its function is as follows. Part of a membrane-bound complex that couples electron transfer with translocation of ions across the membrane. Required to maintain the reduced state of SoxR. In Salmonella arizonae (strain ATCC BAA-731 / CDC346-86 / RSK2980), this protein is Ion-translocating oxidoreductase complex subunit E.